We begin with the raw amino-acid sequence, 444 residues long: Glutamate--tRNA ligase 1 (444 aa).

The 'HIGH' region motif lies at 7-17 (PSPTGYLHVGN). A 'KMSKS' region motif is present at residues 238–242 (KISKR). K241 contributes to the ATP binding site.

Belongs to the class-I aminoacyl-tRNA synthetase family. Glutamate--tRNA ligase type 1 subfamily. In terms of assembly, monomer.

It localises to the cytoplasm. The catalysed reaction is tRNA(Glu) + L-glutamate + ATP = L-glutamyl-tRNA(Glu) + AMP + diphosphate. Functionally, catalyzes the attachment of glutamate to tRNA(Glu) in a two-step reaction: glutamate is first activated by ATP to form Glu-AMP and then transferred to the acceptor end of tRNA(Glu). The polypeptide is Glutamate--tRNA ligase 1 (Wolbachia pipientis subsp. Culex pipiens (strain wPip)).